We begin with the raw amino-acid sequence, 27 residues long: Histone H1.3, embryonic (27 aa).

In terms of domain architecture, H15 spans 1–27 (HVVAAITALKERGGSSHQALKKYKAAN).

This sequence belongs to the histone H1/H5 family.

It localises to the nucleus. It is found in the chromosome. Its function is as follows. Histones H1 are necessary for the condensation of nucleosome chains into higher-order structures. This Parechinus angulosus (Angulate sea urchin) protein is Histone H1.3, embryonic.